We begin with the raw amino-acid sequence, 446 residues long: Histidinol dehydrogenase homolog (446 aa).

His266 contributes to the Zn(2+) binding site. Active-site proton acceptor residues include Glu334 and His335. A Zn(2+)-binding site is contributed by His427.

It belongs to the histidinol dehydrogenase family. The cofactor is Zn(2+).

The protein is Histidinol dehydrogenase homolog of Colwellia psychrerythraea (strain 34H / ATCC BAA-681) (Vibrio psychroerythus).